We begin with the raw amino-acid sequence, 445 residues long: Proline--tRNA ligase (445 aa).

The protein belongs to the class-II aminoacyl-tRNA synthetase family. ProS type 2 subfamily. Homodimer.

The protein localises to the cytoplasm. It carries out the reaction tRNA(Pro) + L-proline + ATP = L-prolyl-tRNA(Pro) + AMP + diphosphate. Functionally, catalyzes the attachment of proline to tRNA(Pro) in a two-step reaction: proline is first activated by ATP to form Pro-AMP and then transferred to the acceptor end of tRNA(Pro). The polypeptide is Proline--tRNA ligase (Cereibacter sphaeroides (strain ATCC 17025 / ATH 2.4.3) (Rhodobacter sphaeroides)).